Here is a 323-residue protein sequence, read N- to C-terminus: Cell division protein ZipA (323 aa).

At 1–4 the chain is on the periplasmic side; it reads MDLN. The helical transmembrane segment at 5 to 25 threads the bilayer; it reads TILIILGIIALIILVVHGLWA. The Cytoplasmic portion of the chain corresponds to 26–323; it reads NRREKSQYFK…AEKAYLDKVR (298 aa). Residues 44 to 73 are disordered; that stretch reads SRLREPPAHIQSASEEKKDANTSTPTAEVS.

It belongs to the ZipA family. In terms of assembly, interacts with FtsZ via their C-terminal domains.

It localises to the cell inner membrane. Essential cell division protein that stabilizes the FtsZ protofilaments by cross-linking them and that serves as a cytoplasmic membrane anchor for the Z ring. Also required for the recruitment to the septal ring of downstream cell division proteins. The polypeptide is Cell division protein ZipA (Pasteurella multocida (strain Pm70)).